A 123-amino-acid polypeptide reads, in one-letter code: Small ribosomal subunit protein uS12 (123 aa).

Residue D89 is modified to 3-methylthioaspartic acid. The segment at 100 to 123 (GSLDTSGVKDRKQGRSKYGTKRPK) is disordered. Basic residues predominate over residues 113 to 123 (GRSKYGTKRPK).

The protein belongs to the universal ribosomal protein uS12 family. As to quaternary structure, part of the 30S ribosomal subunit. Contacts proteins S8 and S17. May interact with IF1 in the 30S initiation complex.

In terms of biological role, with S4 and S5 plays an important role in translational accuracy. Its function is as follows. Interacts with and stabilizes bases of the 16S rRNA that are involved in tRNA selection in the A site and with the mRNA backbone. Located at the interface of the 30S and 50S subunits, it traverses the body of the 30S subunit contacting proteins on the other side and probably holding the rRNA structure together. The combined cluster of proteins S8, S12 and S17 appears to hold together the shoulder and platform of the 30S subunit. The chain is Small ribosomal subunit protein uS12 from Ectopseudomonas mendocina (strain ymp) (Pseudomonas mendocina).